The sequence spans 327 residues: MSHLAELVASAKAAINEASDVAALDNVRVEYLGKKGHLTLQMTTLRELPPEERPAAGAVINEAKEQVQQALNARKADLEGAALNARLAAETIDVSLPGRRIENGGLHPVTRTIDRIESFFGELGFTVATGPEIEDDYHNFDALNIPGHHPARADHDTFWFDATRLLRTQTSGVQIRTMENQQPPIRIIAPGRVYRNDYDQTHTPMFHQMEGLIVDKNISFTNLKGTLHDFLNNFFEEDLQVRFRPSYFPFTEPSAEVDVMGKNGKWLEVLGCGMVHPNVLRNVGIDPEVYSGFAFGMGMERLTMLRYGVTDLRAFFENDLRFLKQFK.

Glu-252 provides a ligand contact to Mg(2+).

It belongs to the class-II aminoacyl-tRNA synthetase family. Phe-tRNA synthetase alpha subunit type 1 subfamily. As to quaternary structure, tetramer of two alpha and two beta subunits. Requires Mg(2+) as cofactor.

The protein localises to the cytoplasm. The catalysed reaction is tRNA(Phe) + L-phenylalanine + ATP = L-phenylalanyl-tRNA(Phe) + AMP + diphosphate + H(+). The chain is Phenylalanine--tRNA ligase alpha subunit from Klebsiella pneumoniae (strain 342).